Reading from the N-terminus, the 270-residue chain is Interleukin-1 alpha (270 aa).

A propeptide spanning residues 1-114 (MAKVPDLFED…HDLEETIQPR (114 aa)) is cleaved from the precursor. N-linked (GlcNAc...) asparagine glycosylation occurs at asparagine 64. Lysine 85 is subject to N6-acetyllysine. The tract at residues 85-89 (KKRRL) is nuclear localization signal (NLS). A Phosphoserine modification is found at serine 90. N-linked (GlcNAc...) asparagine glycans are attached at residues asparagine 139 and asparagine 143.

The protein belongs to the IL-1 family. In terms of assembly, monomer. Interacts with TMED10; the interaction mediates the translocation from the cytoplasm into the ERGIC (endoplasmic reticulum-Golgi intermediate compartment) and thereby secretion. Interacts with IL1R1. Interacts with S100A13; this interaction is the first step in the export of IL1A, followed by direct translocation of this complex across the plasma membrane. In terms of processing, acetylated within its nuclear localization sequence, which impacts subcellular localization. Proteolytic processed by CAPN1 in a calcium-dependent manner. Cleavage from 31 kDa precursor to 18 kDa biologically active molecules. Post-translationally, phosphorylated. Phosphorylation greatly enhances susceptibility to digestion and promotes the conversion of pre-IL1A alpha to the biologically active IL1A.

The protein localises to the nucleus. The protein resides in the cytoplasm. It is found in the secreted. Its function is as follows. Cytokine constitutively present intracellularly in nearly all resting non-hematopoietic cells that plays an important role in inflammation and bridges the innate and adaptive immune systems. After binding to its receptor IL1R1 together with its accessory protein IL1RAP, forms the high affinity interleukin-1 receptor complex. Signaling involves the recruitment of adapter molecules such as MYD88, IRAK1 or IRAK4. In turn, mediates the activation of NF-kappa-B and the three MAPK pathways p38, p42/p44 and JNK pathways. Within the cell, acts as an alarmin and cell death results in its liberation in the extracellular space after disruption of the cell membrane to induce inflammation and alert the host to injury or damage. In addition to its role as a danger signal, which occurs when the cytokine is passively released by cell necrosis, directly senses DNA damage and acts as a signal for genotoxic stress without loss of cell integrity. The polypeptide is Interleukin-1 alpha (Mus musculus (Mouse)).